A 120-amino-acid polypeptide reads, in one-letter code: MFLLHEYDIFWTFLIISSVIPILAFLISGVLAPINEGPEKLSSYESGIEPMGDAWVQFRIRYYMFALVFVVFDVETVFLYPWAMSFDVLGVSVFIEAFIFVLIPIVGSVYAWRKGALEWS.

The next 3 helical transmembrane spans lie at 9–29, 64–84, and 88–108; these read IFWT…LISG, MFAL…PWAM, and VLGV…IVGS.

This sequence belongs to the complex I subunit 3 family. NDH is composed of at least 16 different subunits, 5 of which are encoded in the nucleus.

The protein localises to the plastid. The protein resides in the chloroplast thylakoid membrane. The enzyme catalyses a plastoquinone + NADH + (n+1) H(+)(in) = a plastoquinol + NAD(+) + n H(+)(out). The catalysed reaction is a plastoquinone + NADPH + (n+1) H(+)(in) = a plastoquinol + NADP(+) + n H(+)(out). Its function is as follows. NDH shuttles electrons from NAD(P)H:plastoquinone, via FMN and iron-sulfur (Fe-S) centers, to quinones in the photosynthetic chain and possibly in a chloroplast respiratory chain. The immediate electron acceptor for the enzyme in this species is believed to be plastoquinone. Couples the redox reaction to proton translocation, and thus conserves the redox energy in a proton gradient. The sequence is that of NAD(P)H-quinone oxidoreductase subunit 3, chloroplastic from Piper cenocladum (Ant piper).